The chain runs to 162 residues: NADH-quinone oxidoreductase subunit I (162 aa).

2 4Fe-4S ferredoxin-type domains span residues 53-83 (LRRY…IESE) and 93-122 (TRYD…ETHI). Cysteine 63, cysteine 66, cysteine 69, cysteine 73, cysteine 102, cysteine 105, cysteine 108, and cysteine 112 together coordinate [4Fe-4S] cluster.

The protein belongs to the complex I 23 kDa subunit family. In terms of assembly, NDH-1 is composed of 14 different subunits. Subunits NuoA, H, J, K, L, M, N constitute the membrane sector of the complex. Requires [4Fe-4S] cluster as cofactor.

It localises to the cell inner membrane. It carries out the reaction a quinone + NADH + 5 H(+)(in) = a quinol + NAD(+) + 4 H(+)(out). Functionally, NDH-1 shuttles electrons from NADH, via FMN and iron-sulfur (Fe-S) centers, to quinones in the respiratory chain. The immediate electron acceptor for the enzyme in this species is believed to be ubiquinone. Couples the redox reaction to proton translocation (for every two electrons transferred, four hydrogen ions are translocated across the cytoplasmic membrane), and thus conserves the redox energy in a proton gradient. The chain is NADH-quinone oxidoreductase subunit I from Bordetella bronchiseptica (strain ATCC BAA-588 / NCTC 13252 / RB50) (Alcaligenes bronchisepticus).